A 399-amino-acid chain; its full sequence is Argininosuccinate synthase (399 aa).

9-17 contributes to the ATP binding site; sequence AYSGGLDTS. Tyr-87 contacts L-citrulline. Gly-117 is a binding site for ATP. L-aspartate-binding residues include Thr-119, Asn-123, and Asp-124. Asn-123 is an L-citrulline binding site. L-citrulline-binding residues include Arg-127, Ser-176, Ser-185, Glu-261, and Tyr-273.

It belongs to the argininosuccinate synthase family. Type 1 subfamily. In terms of assembly, homotetramer.

It is found in the cytoplasm. It catalyses the reaction L-citrulline + L-aspartate + ATP = 2-(N(omega)-L-arginino)succinate + AMP + diphosphate + H(+). Its pathway is amino-acid biosynthesis; L-arginine biosynthesis; L-arginine from L-ornithine and carbamoyl phosphate: step 2/3. The polypeptide is Argininosuccinate synthase (Chlorobium chlorochromatii (strain CaD3)).